A 452-amino-acid polypeptide reads, in one-letter code: GTPase Der (452 aa).

EngA-type G domains lie at 4–169 (PIVA…PTTE) and 177–352 (IKVA…ASHR). GTP contacts are provided by residues 10–17 (GRPNVGKS), 57–61 (DTGGL), 120–123 (NKCE), 183–190 (GRPNVGKS), 230–234 (DTAGI), and 295–298 (NKWD). One can recognise a KH-like domain in the interval 353-438 (RRVSTAVINE…PIRLIWRGKS (86 aa)).

This sequence belongs to the TRAFAC class TrmE-Era-EngA-EngB-Septin-like GTPase superfamily. EngA (Der) GTPase family. As to quaternary structure, associates with the 50S ribosomal subunit.

Functionally, GTPase that plays an essential role in the late steps of ribosome biogenesis. The sequence is that of GTPase Der from Gloeothece citriformis (strain PCC 7424) (Cyanothece sp. (strain PCC 7424)).